The chain runs to 789 residues: Fibrinogen alpha chain (789 aa).

The first 19 residues, 1-19 (MLSLRVTCLILSVASTVWT), serve as a signal peptide directing secretion. Serine 46 carries the post-translational modification Phosphoserine. The stretch at 69 to 554 (CRMKGLIDEA…GRARARPTRD (486 aa)) forms a coiled coil. Basic and acidic residues-rich tracts occupy residues 263–287 (ERPG…RGDF) and 384–396 (KGDK…KEKV). The disordered stretch occupies residues 263–420 (ERPGKDGGSR…TITKTVTGPD (158 aa)). Polar residues predominate over residues 397-416 (TSSGTSTTHRSCSKTITKTV). Cysteine 408 and cysteine 438 are joined by a disulfide. The residue at position 447 (serine 447) is a Phosphoserine. Proline 504 carries the post-translational modification 4-hydroxyproline; by P4HA1. Positions 526-541 (ADEAGSEAHREGETRN) are enriched in basic and acidic residues. The interval 526 to 555 (ADEAGSEAHREGETRNTKRGRARARPTRDC) is disordered. Positions 546–787 (RARARPTRDC…AVRMKIRPLV (242 aa)) constitute a Fibrinogen C-terminal domain. Residue asparagine 609 is glycosylated (N-linked (GlcNAc...) asparagine). Residues aspartate 714, aspartate 716, tryptophan 718, and glutamate 720 each contribute to the Ca(2+) site. Residues cysteine 722 and cysteine 735 are joined by a disulfide bond.

In terms of assembly, heterohexamer; disulfide linked. Contains 2 sets of 3 non-identical chains (alpha, beta and gamma). The 2 heterotrimers are in head to head conformation with the N-termini in a small central domain. In terms of processing, conversion of fibrinogen to fibrin is triggered by thrombin, which cleaves fibrinopeptides A and B from alpha and beta chains, and thus exposes the N-terminal polymerization sites responsible for the formation of the soft clot. The soft clot is converted into the hard clot by factor XIIIA which catalyzes the epsilon-(gamma-glutamyl)lysine cross-linking between gamma chains (stronger) and between alpha chains (weaker) of different monomers. Forms F13A-mediated cross-links between a glutamine and the epsilon-amino group of a lysine residue, forming fibronectin-fibrinogen heteropolymers. Post-translationally, phosphorylated by FAM20C in the extracellular medium. Expressed in liver.

It is found in the secreted. Its function is as follows. Cleaved by the protease thrombin to yield monomers which, together with fibrinogen beta (FGB) and fibrinogen gamma (FGG), polymerize to form an insoluble fibrin matrix. Fibrin has a major function in hemostasis as one of the primary components of blood clots. In addition, functions during the early stages of wound repair to stabilize the lesion and guide cell migration during re-epithelialization. Was originally thought to be essential for platelet aggregation, based on in vitro studies using anticoagulated blood. However, subsequent studies have shown that it is not absolutely required for thrombus formation in vivo. Enhances expression of SELP in activated platelets via an ITGB3-dependent pathway. Maternal fibrinogen is essential for successful pregnancy. Fibrin deposition is also associated with infection, where it protects against IFNG-mediated hemorrhage. May also facilitate the immune response via both innate and T-cell mediated pathways. This is Fibrinogen alpha chain from Mus musculus (Mouse).